The chain runs to 459 residues: Hypotaurine/taurine--pyruvate aminotransferase (459 aa).

Residue Lys287 is modified to N6-(pyridoxal phosphate)lysine.

This sequence belongs to the class-III pyridoxal-phosphate-dependent aminotransferase family. It depends on pyridoxal 5'-phosphate as a cofactor.

It carries out the reaction hypotaurine + pyruvate = 2-sulfinoacetaldehyde + L-alanine. The enzyme catalyses taurine + pyruvate = sulfoacetaldehyde + L-alanine. Its pathway is organosulfur degradation. Its function is as follows. Converts hypotaurine to alanine and sulfinoacetaldehyde, which desulfinates spontaneously to acetaldehyde and sulfite. Can also catalyze the degradation of taurine into alanine and sulfoacetaldehyde, which is stable. Has 2-fold higher aminotransferase activity with hypotaurine as the substrate. This chain is Hypotaurine/taurine--pyruvate aminotransferase, found in Paracoccus denitrificans (strain Pd 1222).